The primary structure comprises 858 residues: Zinc finger protein ZXDC (858 aa).

Disordered regions lie at residues Met-1 to Gly-127 and Pro-151 to Gly-174. Low complexity-rich tracts occupy residues Pro-23–Pro-35, Gly-84–Glu-97, and Pro-151–Ser-171. Residue Ser-34 is modified to Phosphoserine. Thr-172 is subject to Phosphothreonine. 10 consecutive C2H2-type zinc fingers follow at residues Tyr-175–His-199, Phe-208–His-232, Phe-238–His-262, Phe-268–His-290, Tyr-297–His-321, Phe-328–His-352, Phe-358–His-382, Phe-388–His-412, Phe-418–His-442, and Ser-451–His-476. A required for transcriptional activation region spans residues Asp-579 to Ser-688. A Glycyl lysine isopeptide (Lys-Gly) (interchain with G-Cter in SUMO) cross-link involves residue Lys-660. Disordered stretches follow at residues Lys-660–Gln-696, Lys-726–His-756, and Gly-837–Gln-858. Ser-665 is modified (phosphoserine). A compositionally biased stretch (polar residues) spans Gln-675–Pro-687. The tract at residues Pro-781–Gln-858 is interaction with CIITA. The span at Phe-847–Gln-858 shows a compositional bias: polar residues.

The protein belongs to the ZXD family. As to quaternary structure, self-associates. Interacts with ZXDA and CIITA. In terms of processing, sumoylated at Lys-660 with SUMO1, SUMO2 and SUMO3; sumoylation enhances the activity of the transcriptional activation domain. In terms of tissue distribution, expressed at high levels in heart, kidney, liver and testis, at moderate levels in brain and stomach, and at low levels in lung, muscle, placenta, small intestine and spleen.

Its subcellular location is the nucleus. Cooperates with CIITA to promote transcription of MHC class I and MHC class II genes. This chain is Zinc finger protein ZXDC (ZXDC), found in Homo sapiens (Human).